Reading from the N-terminus, the 230-residue chain is Homeobox protein Hox-B5 (230 aa).

Residues 1–135 (GGGGGNVSGS…GAAGTDGQSP (135 aa)) form a disordered region. Over residues 49–65 (FPGQESSRFRANQNCPL) the composition is skewed to polar residues. Residues 87 to 103 (ATSSAHFTETEETSASS) show a composition bias toward low complexity. Residues 137 to 142 (IFPWMR) carry the Antp-type hexapeptide motif. Positions 155-214 (GKRARTAYTRYQTLELEKEFHFNRYLTRRRRIEIAHTLCLSERQIKIWFQNRRMKWKKDN) form a DNA-binding region, homeobox.

This sequence belongs to the Antp homeobox family.

Its subcellular location is the nucleus. Functionally, sequence-specific transcription factor which is part of a developmental regulatory system that provides cells with specific positional identities on the anterior-posterior axis. This is Homeobox protein Hox-B5 (hoxb5) from Xenopus laevis (African clawed frog).